Here is a 486-residue protein sequence, read N- to C-terminus: Protein nucleotidyltransferase YdiU (486 aa).

8 residues coordinate ATP: Gly-90, Gly-92, Arg-93, Lys-113, Asp-125, Gly-126, Arg-176, and Arg-183. The active-site Proton acceptor is Asp-252. Positions 253 and 262 each coordinate Mg(2+). Residue Asp-262 coordinates ATP.

The protein belongs to the SELO family. It depends on Mg(2+) as a cofactor. The cofactor is Mn(2+).

The enzyme catalyses L-seryl-[protein] + ATP = 3-O-(5'-adenylyl)-L-seryl-[protein] + diphosphate. It carries out the reaction L-threonyl-[protein] + ATP = 3-O-(5'-adenylyl)-L-threonyl-[protein] + diphosphate. It catalyses the reaction L-tyrosyl-[protein] + ATP = O-(5'-adenylyl)-L-tyrosyl-[protein] + diphosphate. The catalysed reaction is L-histidyl-[protein] + UTP = N(tele)-(5'-uridylyl)-L-histidyl-[protein] + diphosphate. The enzyme catalyses L-seryl-[protein] + UTP = O-(5'-uridylyl)-L-seryl-[protein] + diphosphate. It carries out the reaction L-tyrosyl-[protein] + UTP = O-(5'-uridylyl)-L-tyrosyl-[protein] + diphosphate. Functionally, nucleotidyltransferase involved in the post-translational modification of proteins. It can catalyze the addition of adenosine monophosphate (AMP) or uridine monophosphate (UMP) to a protein, resulting in modifications known as AMPylation and UMPylation. The protein is Protein nucleotidyltransferase YdiU of Pseudomonas putida (strain ATCC 47054 / DSM 6125 / CFBP 8728 / NCIMB 11950 / KT2440).